Consider the following 264-residue polypeptide: GTP cyclohydrolase FolE2 (264 aa).

This sequence belongs to the GTP cyclohydrolase IV family.

It carries out the reaction GTP + H2O = 7,8-dihydroneopterin 3'-triphosphate + formate + H(+). Its pathway is cofactor biosynthesis; 7,8-dihydroneopterin triphosphate biosynthesis; 7,8-dihydroneopterin triphosphate from GTP: step 1/1. Converts GTP to 7,8-dihydroneopterin triphosphate. This Ruthia magnifica subsp. Calyptogena magnifica protein is GTP cyclohydrolase FolE2.